The primary structure comprises 228 residues: SPbeta prophage-derived uncharacterized protein YomL (228 aa).

The signal sequence occupies residues Met1–Ala28.

The protein is SPbeta prophage-derived uncharacterized protein YomL (yomL) of Bacillus subtilis (strain 168).